The following is a 124-amino-acid chain: Desulfoferrodoxin homolog (124 aa).

Residues Cys-10, Cys-13, Cys-29, Cys-30, His-49, His-69, His-75, Cys-117, and His-120 each coordinate Fe cation.

It belongs to the desulfoferrodoxin family. Requires Fe(3+) as cofactor. The cofactor is Cu(2+).

This Methanothermobacter thermautotrophicus (strain ATCC 29096 / DSM 1053 / JCM 10044 / NBRC 100330 / Delta H) (Methanobacterium thermoautotrophicum) protein is Desulfoferrodoxin homolog.